Here is a 666-residue protein sequence, read N- to C-terminus: LEAF RUST 10 DISEASE-RESISTANCE LOCUS RECEPTOR-LIKE PROTEIN KINASE-like 2.5 (666 aa).

Residues 1–30 (MINFSLSLTKSMSYSFIWMLFVIHISCVLS) form the signal peptide. At 31–275 (ADGNHILCSP…PTRNKVILKL (245 aa)) the chain is on the extracellular side. N-linked (GlcNAc...) asparagine glycans are attached at residues Asn-119, Asn-141, Asn-171, and Asn-198. The chain crosses the membrane as a helical span at residues 276–296 (FFIVIYVLGIGAASFAMMGVI). At 297–666 (LVVTCLNCLI…YTEICSINVA (370 aa)) the chain is on the cytoplasmic side. The 289-residue stretch at 348–636 (KSFAEVIGKG…ALEVPPRPVL (289 aa)) folds into the Protein kinase domain. ATP contacts are provided by residues 354–362 (IGKGGFGTV) and Lys-376. Tyr-420 carries the phosphotyrosine modification. Asp-471 acts as the Proton acceptor in catalysis. Residues Thr-508 and Thr-511 each carry the phosphothreonine modification.

This sequence belongs to the protein kinase superfamily. Ser/Thr protein kinase family.

Its subcellular location is the membrane. It carries out the reaction L-seryl-[protein] + ATP = O-phospho-L-seryl-[protein] + ADP + H(+). The catalysed reaction is L-threonyl-[protein] + ATP = O-phospho-L-threonyl-[protein] + ADP + H(+). The polypeptide is LEAF RUST 10 DISEASE-RESISTANCE LOCUS RECEPTOR-LIKE PROTEIN KINASE-like 2.5 (Arabidopsis thaliana (Mouse-ear cress)).